The primary structure comprises 251 residues: MLISRYTGIPILKDTLYAHPYEAVGEFQFDDSVVAVFPDMIQRSVPGYQTILTGIGELTAKYAQPNSQLYDLGCSLGAATLTMRRKAPQGSQIIAVDTSQPMIERAKEHIEGFHSDIPVRLLCDDMTQIPIENASVVVINFTLQFIEPSARQVLLDKIYQGLKPGGILILSEKIHFESAELQEAIEHLQLQFKRANGYSELEISQKRASLENVLISDSEATHLNRLQQSGFKAANIWFQAYNFASFLAIKA.

S-adenosyl-L-methionine contacts are provided by residues tyrosine 48, 73–75, asparagine 140, and arginine 207; that span reads GCS.

It belongs to the class I-like SAM-binding methyltransferase superfamily. Cx-SAM synthase family. Homodimer.

The catalysed reaction is prephenate + S-adenosyl-L-methionine = carboxy-S-adenosyl-L-methionine + 3-phenylpyruvate + H2O. Its function is as follows. Catalyzes the conversion of S-adenosyl-L-methionine (SAM) to carboxy-S-adenosyl-L-methionine (Cx-SAM). The protein is Carboxy-S-adenosyl-L-methionine synthase of Hydrogenovibrio crunogenus (strain DSM 25203 / XCL-2) (Thiomicrospira crunogena).